The following is a 32-amino-acid chain: Cytochrome b6-f complex subunit 7 (32 aa).

The helical transmembrane segment at 9 to 27 threads the bilayer; the sequence is AALFWVLIPLGLAGGALLL.

Belongs to the PetM family. In terms of assembly, the 4 large subunits of the cytochrome b6-f complex are cytochrome b6, subunit IV (17 kDa polypeptide, PetD), cytochrome f and the Rieske protein, while the 4 small subunits are PetG, PetL, PetM and PetN. The complex functions as a dimer.

The protein localises to the cellular thylakoid membrane. Functionally, component of the cytochrome b6-f complex, which mediates electron transfer between photosystem II (PSII) and photosystem I (PSI), cyclic electron flow around PSI, and state transitions. The sequence is that of Cytochrome b6-f complex subunit 7 from Synechococcus sp. (strain RCC307).